The chain runs to 331 residues: Photosystem II assembly lipoprotein Ycf48 (331 aa).

The first 23 residues, 1-23 (MIPVIRSFLSLLLCVGLTFGLGG), serve as a signal peptide directing secretion. Residue cysteine 24 is the site of N-palmitoyl cysteine attachment. Residue cysteine 24 is the site of S-diacylglycerol cysteine attachment.

Belongs to the Ycf48 family. Part of early PSII assembly complexes which includes D1 (psbA) and PsbI; not found in mature PSII. Binds to the lumenal side of PSII complexes. Interacts with YidC.

It is found in the cellular thylakoid membrane. Functionally, a factor required for optimal assembly of photosystem II (PSII), acting in the early stages of PSII assembly. Also plays a role in replacement of photodamaged D1 (psbA). Assists YidC in synthesis of chlorophyll-binding proteins. In Synechococcus sp. (strain RCC307), this protein is Photosystem II assembly lipoprotein Ycf48.